The following is a 428-amino-acid chain: Serine hydroxymethyltransferase (428 aa).

Residue 120 to 122 (GHI) coordinates (6S)-5,6,7,8-tetrahydrofolate. Position 226 is an N6-(pyridoxal phosphate)lysine (Lys-226).

It belongs to the SHMT family. As to quaternary structure, homodimer. The cofactor is pyridoxal 5'-phosphate.

It is found in the cytoplasm. The enzyme catalyses 5,10-methylenetetrahydromethanopterin + glycine + H2O = 5,6,7,8-tetrahydromethanopterin + L-serine. It functions in the pathway amino-acid biosynthesis; glycine biosynthesis; glycine from L-serine: step 1/1. Its function is as follows. Catalyzes the reversible interconversion of serine and glycine with tetrahydromethanopterin (H4MPT) serving as the one-carbon carrier. Also exhibits a pteridine-independent aldolase activity toward beta-hydroxyamino acids, producing glycine and aldehydes, via a retro-aldol mechanism. This chain is Serine hydroxymethyltransferase, found in Methanopyrus kandleri (strain AV19 / DSM 6324 / JCM 9639 / NBRC 100938).